Here is a 327-residue protein sequence, read N- to C-terminus: Acetyl-coenzyme A carboxylase carboxyl transferase subunit beta (327 aa).

The CoA carboxyltransferase N-terminal domain occupies Leu-24 to Pro-293. Over residues Pro-293–Val-311 the composition is skewed to low complexity. Residues Pro-293–Ala-327 form a disordered region. Over residues Ala-312–Ala-327 the composition is skewed to pro residues.

This sequence belongs to the AccD/PCCB family. Acetyl-CoA carboxylase is a heterohexamer composed of biotin carboxyl carrier protein (AccB), biotin carboxylase (AccC) and two subunits each of ACCase subunit alpha (AccA) and ACCase subunit beta (AccD).

Its subcellular location is the cytoplasm. The enzyme catalyses N(6)-carboxybiotinyl-L-lysyl-[protein] + acetyl-CoA = N(6)-biotinyl-L-lysyl-[protein] + malonyl-CoA. It functions in the pathway lipid metabolism; malonyl-CoA biosynthesis; malonyl-CoA from acetyl-CoA: step 1/1. Component of the acetyl coenzyme A carboxylase (ACC) complex. Biotin carboxylase (BC) catalyzes the carboxylation of biotin on its carrier protein (BCCP) and then the CO(2) group is transferred by the transcarboxylase to acetyl-CoA to form malonyl-CoA. This is Acetyl-coenzyme A carboxylase carboxyl transferase subunit beta from Rhodopseudomonas palustris (strain TIE-1).